The following is a 1747-amino-acid chain: E3 ubiquitin-protein ligase listerin (1747 aa).

The disordered stretch occupies residues 1-24 (MGGKTKQAPRTKNNAKPSSSSRTA). Residues 8–24 (APRTKNNAKPSSSSRTA) show a composition bias toward polar residues. HEAT repeat units follow at residues 65 to 102 (AAIS…QSDV), 106 to 144 (KNIL…KCKK), 346 to 383 (NIRK…KVTQ), 424 to 461 (NAYF…NVLE), and 508 to 547 (KFWI…ANPS). A Phosphoserine modification is found at Ser566. 12 HEAT repeats span residues 612–653 (SRYI…LLGQ), 664–711 (EIVF…CAEA), 789–825 (SFIA…EHRP), 952–989 (LSRN…DPED), 1005–1042 (KWNE…ELVL), 1053–1090 (GNSS…FCPQ), 1129–1166 (KLSQ…NFEG), 1216–1258 (VEFI…SIAQ), 1269–1307 (VAVY…LFAK), 1330–1363 (FQAC…NSNI), 1364–1400 (TLDH…HFVA), and 1500–1539 (ENFL…QKDR). Residues 1697 to 1744 (CYVCYTVIHQETCQLPKLTCKTCKKKFHGPCLYKWFTTSSKSTCPICR) form an RING-type zinc finger.

Belongs to the LTN1 family. In terms of assembly, component of the ribosome quality control complex (RQC), composed of at least the E3 ubiquitin ligase l(3)76BDr/LTN1 and Clbn/NEMF. The complex probably also contains TCF25 as well as TER94/VCP and its ubiquitin-binding cofactors. RQC forms a stable complex with 60S ribosomal subunits.

The protein localises to the cytoplasm. Its subcellular location is the cytosol. The enzyme catalyses S-ubiquitinyl-[E2 ubiquitin-conjugating enzyme]-L-cysteine + [acceptor protein]-L-lysine = [E2 ubiquitin-conjugating enzyme]-L-cysteine + N(6)-ubiquitinyl-[acceptor protein]-L-lysine.. Its pathway is protein modification; protein ubiquitination. In terms of biological role, E3 ubiquitin-protein ligase component of the ribosome quality control complex (RQC), a ribosome-associated complex that mediates ubiquitination and extraction of incompletely synthesized nascent chains for proteasomal degradation. Ubiquitination leads to TER94/VCP recruitment for extraction and degradation of the incomplete translation product. The chain is E3 ubiquitin-protein ligase listerin from Drosophila melanogaster (Fruit fly).